A 492-amino-acid polypeptide reads, in one-letter code: E3 ubiquitin-protein ligase XIAP (492 aa).

BIR repeat units follow at residues 40–105 (RLAS…KFIN), 172–237 (RLQT…YFVL), and 271–334 (RLET…KFLI). Zn(2+) is bound by residues Cys-303, Cys-306, His-323, and Cys-330. An RING-type zinc finger spans residues 445 to 480 (CKVCMDRRISIVFIPCGHLVACAVCADVLDKCPICC).

The protein belongs to the IAP family. In terms of assembly, monomer, and homodimer. In terms of processing, degraded in a 2-step mechanism; a caspase-independent first step and a caspase-dependent second step. Stabilized indirectly by MAPK, which acts to delay caspase activation, rather than directly phosphorylating xiap.

The protein resides in the cytoplasm. It carries out the reaction S-ubiquitinyl-[E2 ubiquitin-conjugating enzyme]-L-cysteine + [acceptor protein]-L-lysine = [E2 ubiquitin-conjugating enzyme]-L-cysteine + N(6)-ubiquitinyl-[acceptor protein]-L-lysine.. Functionally, multi-functional protein which regulates not only caspases and apoptosis, but also acts as an E3 ubiquitin-protein ligase mediating ubiquitination and subsequent proteasomal degradation of its target proteins. Acts as a direct caspase inhibitor. E3 ubiquitin-protein ligase that acts as an important regulator of innate immunity by mediating 'Lys-63'-linked polyubiquitination of ripk2 downstream of NOD1 and NOD2, thereby transforming ripk2 into a scaffolding protein for downstream effectors, ultimately leading to activation of the NF-kappa-B and MAP kinases signaling. A key apoptotic suppressor in eggs. Acts as a positive regulator of Wnt signaling. In Xenopus tropicalis (Western clawed frog), this protein is E3 ubiquitin-protein ligase XIAP (xiap).